A 177-amino-acid chain; its full sequence is ATP synthase subunit b (177 aa).

Residues 15 to 35 (GISGGTIIYQLLMFIILLALL) traverse the membrane as a helical segment.

It belongs to the ATPase B chain family. As to quaternary structure, F-type ATPases have 2 components, F(1) - the catalytic core - and F(0) - the membrane proton channel. F(1) has five subunits: alpha(3), beta(3), gamma(1), delta(1), epsilon(1). F(0) has three main subunits: a(1), b(2) and c(10-14). The alpha and beta chains form an alternating ring which encloses part of the gamma chain. F(1) is attached to F(0) by a central stalk formed by the gamma and epsilon chains, while a peripheral stalk is formed by the delta and b chains.

The protein resides in the cell membrane. F(1)F(0) ATP synthase produces ATP from ADP in the presence of a proton or sodium gradient. F-type ATPases consist of two structural domains, F(1) containing the extramembraneous catalytic core and F(0) containing the membrane proton channel, linked together by a central stalk and a peripheral stalk. During catalysis, ATP synthesis in the catalytic domain of F(1) is coupled via a rotary mechanism of the central stalk subunits to proton translocation. Its function is as follows. Component of the F(0) channel, it forms part of the peripheral stalk, linking F(1) to F(0). The sequence is that of ATP synthase subunit b from Geobacillus kaustophilus (strain HTA426).